The primary structure comprises 532 residues: Type 2 DNA topoisomerase 6 subunit B (532 aa).

ATP-binding positions include N41, D75, S96–K97, G105–K112, and K427.

The protein belongs to the TOP6B family. As to quaternary structure, homodimer. Heterotetramer of two Top6A and two Top6B chains.

The catalysed reaction is ATP-dependent breakage, passage and rejoining of double-stranded DNA.. Its function is as follows. Relaxes both positive and negative superturns and exhibits a strong decatenase activity. This Sulfurisphaera tokodaii (strain DSM 16993 / JCM 10545 / NBRC 100140 / 7) (Sulfolobus tokodaii) protein is Type 2 DNA topoisomerase 6 subunit B.